A 1170-amino-acid chain; its full sequence is MDADWDEVTRIAYPAPGTNDFPRPATAVAFDPIAELLWAGFDRGRVCSFYGRDLTRYTAFKIQPASEGPVRQFLFHDKGVIVLGTRSVHMAMRRGPALWNIRHENMKDLRCMSFTSKGTQEIIVAGWQDTMLVIDVLKGDIIKQIPAQHHYSIMKKSRYICAATKTGSVDLIDPLSFKIVRSWQAHASYINDMDAQNDFIVTCGGSLKQQAAQTYMLDPYVNVFDLKNMASMKPMPFPPLAAHVRLHPRMLTTAIVTSQHGQMHVVDIMNPNSSTVRYANISSYVKLFEIAPSGEALVIGDADCNIHLWGSPTKIHFTDMAIPIELPEPEEPAPVLDWSIETPLSSIGLPYYREPLFSAWPADIISDVGAPPLQLEPSFVATLKQAEWGLYGKNTRNVRRNQVEDTRNTNKQSNALQAPKFLSERARESALSSGGDSSSDPQVDQEPEDPNEIESLKPEAPPLYRNLEIKYSKFGVDDFDFGYYNKTRYAGLENHIPNSYANSLLQLMHYTPLLRNMALQHAATACVSDLCLLCELGFVFDMLQKAEGATCQATNMFKALSGTPQAAPLGLLEEETHVPSLATMAQNLSRFLLEKIHNEYRTIPPISTALEQSLFNFPHPPTPDELVAKVLATSAVATIKCMNCRSETTRPGTTHVIDLLYPPPKTAGRGGRASKVTFSQVLKMGVERETTSKGWCSRCQRYQNLQMRKTIHSVPAVLVVNAGVSNQEHRKLWSTPGWLPEEIGIIVDQGQFFCFEGEDLKLHLQRGIHNITVYSLIGMVINIESHSPQKSHLVGIINVAHAEATPPGENKWHLFNDFSVRPVSAAEALTFNAAWKMPAVLLFQIKSANNKSNLDWKTNLDTSILYKDTNPNTEKKTYRTLDQERERPGPDTIVALDTEFVSLKQPEIQMNSDGERETIRPMSHALARVSVVRGQGENEGSAFIDDYIAIREPVVDYLTLYSGITASDLDPRTSKHNLVSLKTAYKKLWVLLNLGCKFLGHGLKQDFRVINIQVPRAQVIDTIEVFYLKSRLRKLSLAFLAWYLLKEDIQLETHDSIEDARTALKLYRKYLEFDDAGILEAMLEDIYKAGRATNFKPPRREDREKELQRQSTPPNSTAPNDCGAKPDGNGNENGGEPATPARKTGGITAPTFGAVNVFGTPSKASSPLPK.

WD repeat units lie at residues 104-144 (ENMK…IIKQ) and 280-319 (NISSYVKLFEIAPSGEALVIGDADCNIHLWGSPTKIHFTD). The segment at 319–458 (DMAIPIELPE…DPNEIESLKP (140 aa)) is linker. Residues 399–459 (RRNQVEDTRN…PNEIESLKPE (61 aa)) form a disordered region. The span at 443–452 (VDQEPEDPNE) shows a compositional bias: acidic residues. The region spanning 459 to 846 (EAPPLYRNLE…MPAVLLFQIK (388 aa)) is the USP domain. One can recognise an Exonuclease domain in the interval 894–1067 (VALDTEFVSL…EDARTALKLY (174 aa)). The a divalent metal cation site is built by Asp-897, Glu-899, Asp-1006, and Asp-1059. The tract at residues 1094–1170 (NFKPPRREDR…PSKASSPLPK (77 aa)) is disordered. Residues 1098-1108 (PRREDREKELQ) are compositionally biased toward basic and acidic residues. Over residues 1109–1119 (RQSTPPNSTAP) the composition is skewed to polar residues.

Belongs to the peptidase C19 family. PAN2 subfamily. Forms a heterotrimer with an asymmetric homodimer of the regulatory subunit PAN3 to form the poly(A)-nuclease (PAN) deadenylation complex. A divalent metal cation is required as a cofactor.

Its subcellular location is the cytoplasm. The enzyme catalyses Exonucleolytic cleavage of poly(A) to 5'-AMP.. Its activity is regulated as follows. Positively regulated by the regulatory subunit PAN3. Functionally, catalytic subunit of the poly(A)-nuclease (PAN) deadenylation complex, one of two cytoplasmic mRNA deadenylases involved in mRNA turnover. PAN specifically shortens poly(A) tails of RNA and the activity is stimulated by poly(A)-binding protein PAB1. PAN deadenylation is followed by rapid degradation of the shortened mRNA tails by the CCR4-NOT complex. Deadenylated mRNAs are then degraded by two alternative mechanisms, namely exosome-mediated 3'-5' exonucleolytic degradation, or deadenylation-dependent mRNA decaping and subsequent 5'-3' exonucleolytic degradation by XRN1. May also be involved in post-transcriptional maturation of mRNA poly(A) tails. The protein is PAN2-PAN3 deadenylation complex catalytic subunit PAN2 of Chaetomium thermophilum (strain DSM 1495 / CBS 144.50 / IMI 039719) (Thermochaetoides thermophila).